Consider the following 69-residue polypeptide: Pantinin-1 (69 aa).

A signal peptide spans 1–23; that stretch reads MKTQFVILMITVILMQMLVQTEG. Valine 37 carries the valine amide modification. A propeptide spanning residues 41-69 is cleaved from the precursor; that stretch reads GLNDRDQLDDLFDSDLSDADIKLLKEMFK.

This sequence belongs to the non-disulfide-bridged peptide (NDBP) superfamily. Short antimicrobial peptide (group 4) family. In terms of tissue distribution, expressed by the venom gland.

Its subcellular location is the secreted. The protein localises to the target cell membrane. Functionally, amphipathic peptide that possesses relatively strong activities against Gram-positive bacteria and a fungus, but has very weak antimicrobial activities against Gram-negative bacteria. Also exhibits very low hemolytic activities against human erythrocytes (64 uM induce 21% of hemolysis). Minimal inhibitory concentration (MIC) are the following: 8 uM against S.aureus, 32 uM against B.magaterium, 32 uM against M.luteus, 28 uM against vancomycin-resistant Enterococci, 14 uM against methicillin-resistant S.aureus, 62 uM against E.coli, &gt;87 uM against P.putida, &gt;87 uM against K.oxytoca, 76 uM against E.cloacae, 72 uM against S.enterica and 16 uM against the fungus C.tropicalis. This Pandinus imperator (Emperor scorpion) protein is Pantinin-1.